The sequence spans 3411 residues: Genome polyprotein (3411 aa).

The Cytoplasmic portion of the chain corresponds to 1–104 (MSGRKAQGKT…LSSRKRRSHD (104 aa)). Residues 38 to 72 (PGPSRGVQGFIFFFLFNILTGKKITAQLKRLWKML) form a hydrophobic; homodimerization of capsid protein C region. The propeptide at 102-121 (SHDVLTVQFLILGMLLMTGG) is ER anchor for the capsid protein C, removed in mature form by serine protease NS3. Residues 105–125 (VLTVQFLILGMLLMTGGVTLM) form a helical membrane-spanning segment. The Extracellular segment spans residues 126 to 244 (RKNRWLLLNV…GERQLQKIER (119 aa)). 2 N-linked (GlcNAc...) asparagine; by host glycosylation sites follow: Asn134 and Asn150. The chain crosses the membrane as a helical span at residues 245-265 (WFVRNPFFAVTALTIAYLVGS). The Cytoplasmic segment spans residues 266–270 (NMTQR). Residues 271–285 (VVIALLVLAVGPAYS) form a helical membrane-spanning segment. Over 286-730 (AHCIGVADRD…TVFGSAFQGL (445 aa)) the chain is Extracellular. Cystine bridges form between Cys288–Cys315, Cys345–Cys401, Cys345–Cys406, Cys359–Cys390, Cys377–Cys401, Cys377–Cys406, Cys467–Cys568, and Cys585–Cys615. The interval 383-396 (DRGWGNGCGLFGKG) is fusion peptide. A helical transmembrane segment spans residues 731 to 751 (FGGLNWITKVIMGAVLIWVGF). Residues 752–757 (NTRNMT) lie on the Cytoplasmic side of the membrane. A helical transmembrane segment spans residues 758 to 778 (MSMSMILVGVIMMFLSLGVGA). The Extracellular portion of the chain corresponds to 779–1132 (DQGCAINFGK…LVRSWVTAGE (354 aa)). 6 disulfide bridges follow: Cys782-Cys793, Cys833-Cys921, Cys957-Cys1002, Cys1058-Cys1107, Cys1069-Cys1091, and Cys1090-Cys1094. N-linked (GlcNAc...) asparagine; by host glycans are attached at residues Asn908 and Asn986. A helical transmembrane segment spans residues 1133–1153 (IHAVPFGLVSMMIAMEVVLRK). Residues 1154–1201 (RQGPKQVLVGGVVLLGAMLVGQVTLLDLLELTVAVGLHFHEMNNGGDA) lie on the Cytoplasmic side of the membrane. The chain crosses the membrane as a helical span at residues 1202–1222 (MYMALIAAFSVRPGLLIGFGL). The Lumenal portion of the chain corresponds to 1223–1287 (RTLWSPRERL…ILPLMALLTP (65 aa)). A helical membrane pass occupies residues 1288 to 1308 (VTMAEVRLATMLFCTVVIIGV). The Cytoplasmic portion of the chain corresponds to 1309–1355 (LHQNSKDTSMQKTIPLVALTLTSYLGLTQPFLGLCAFLATRIFGRRS). A helical transmembrane segment spans residues 1356 to 1376 (IPVNEALAATGLVGVLAGLAF). Residues 1377-1378 (QE) are Lumenal-facing. The chain crosses the membrane as a helical span at residues 1379-1399 (MENFLGPIAVGGILMMLVSVA). Residues 1400-1456 (GRVDGLELKKLGEVSWEEEAEISGSSARYDVALSEQGEFKLLSEEKVPWDQVVMTSL) lie on the Cytoplasmic side of the membrane. An interacts with and activates NS3 protease region spans residues 1407-1446 (LKKLGEVSWEEEAEISGSSARYDVALSEQGEFKLLSEEKV). The segment at residues 1457–1477 (ALVGAAIHPFALLLVLAGWLF) is an intramembrane region (helical). Topologically, residues 1478–2157 (HVRRARRSGD…RNALSMMPEA (680 aa)) are cytoplasmic. The Peptidase S7 domain maps to 1485–1665 (SGDVLWDIPT…EVKEEGKEEL (181 aa)). Residues His1537, Asp1561, and Ser1622 each act as charge relay system; for serine protease NS3 activity in the active site. Residues 1669 to 1825 (PTMLKKGKTT…HSNGEIEDVQ (157 aa)) enclose the Helicase ATP-binding domain. The segment at 1673–1676 (KKGK) is important for RNA-binding. Position 1682–1689 (1682–1689 (FHPGAGKT)) interacts with ATP. Positions 1773–1776 (DEAH) match the DEAH box motif. One can recognise a Helicase C-terminal domain in the interval 1820–1997 (EIEDVQTDIP…VRGGMVAPLY (178 aa)). Residue Lys1877 is modified to N6-acetyllysine; by host. Residues 1942-1961 (AAQRRGRIGRNPNRDGDSYY) form a disordered region. The chain crosses the membrane as a helical span at residues 2158-2178 (MTIVMLFLLAGLLTSGMVIFF). At 2179-2186 (MSPKGISR) the chain is on the lumenal side. Positions 2187–2207 (MSMAKGTMAGCGYLMFLGGVE) form an intramembrane region, helical. At 2208 to 2209 (PT) the chain is on the lumenal side. The chain crosses the membrane as a helical span at residues 2210–2230 (HISYIMLIFFVLMVVVIPEPG). The Cytoplasmic segment spans residues 2231–2241 (QQRSIQDNQVA). The chain crosses the membrane as a helical span at residues 2242-2256 (FLIIGILTLVSVVAA). The Lumenal segment spans residues 2257-2293 (NELGMLEKTKEDLFGKKNLIPSGASPWSWPDLDLKPG). Residues 2294 to 2314 (AAWTVYVGIVTMLSPMLHHWI) constitute an intramembrane region (helical). The Lumenal portion of the chain corresponds to 2315–2360 (KVEYGNLSLSGIAQSASVLSFMDKGIPFMKMNISVIMLLVSGWNSI). The chain crosses the membrane as a helical span at residues 2361–2380 (TVMPLLCGIGCAMLHWSLIL). The Cytoplasmic portion of the chain corresponds to 2381–2421 (PGIKAQQSKLAQRRVFHGVAKNPVVDGNPTVDIEEAPEMPA). The helical transmembrane segment at 2422 to 2442 (LYEKKLALYLLLALSLASVAM) threads the bilayer. Topologically, residues 2443–2445 (CRT) are lumenal. Residues 2446–2466 (PFSLDEGIVLASAALGPLIEG) form a helical membrane-spanning segment. The Cytoplasmic segment spans residues 2467-3411 (NTSLLWNGPM…DADLQPGELI (945 aa)). In terms of domain architecture, mRNA cap 0-1 NS5-type MT spans 2507–2771 (GTANGKTLGE…DVTLPIGTRS (265 aa)). Position 2562 (Ser2562) interacts with S-adenosyl-L-methionine. Ser2562 bears the Phosphoserine mark. Lys2567 functions as the For 2'-O-MTase activity in the catalytic mechanism. 6 residues coordinate S-adenosyl-L-methionine: Gly2592, Trp2593, Thr2610, Leu2611, Asp2637, and Val2638. Asp2652 acts as the For 2'-O-MTase activity in catalysis. Position 2653 (Ile2653) interacts with S-adenosyl-L-methionine. Active-site for 2'-O-MTase activity residues include Lys2688 and Glu2724. Residue Tyr2726 coordinates S-adenosyl-L-methionine. The Nuclear localization signal signature appears at 2878-2911 (RKIMKVVNRWLFRHLAREKNPRLCTKEEFIAKVR). Residues Glu2945, His2949, Cys2954, and Cys2957 each contribute to the Zn(2+) site. A RdRp catalytic domain is found at 3035-3187 (GGLYADDTAG…RPIDDRFGLA (153 aa)). 3 residues coordinate Zn(2+): His3222, Cys3238, and Cys3357.

In the N-terminal section; belongs to the class I-like SAM-binding methyltransferase superfamily. mRNA cap 0-1 NS5-type methyltransferase family. In terms of assembly, homodimer. Interacts (via N-terminus) with host EXOC1 (via C-terminus); this interaction results in EXOC1 degradation through the proteasome degradation pathway. Forms heterodimers with envelope protein E in the endoplasmic reticulum and Golgi. As to quaternary structure, homodimer; in the endoplasmic reticulum and Golgi. Interacts with protein prM. Interacts with non-structural protein 1. In terms of assembly, homodimer; Homohexamer when secreted. Interacts with envelope protein E. Interacts (via N-terminus) with serine protease NS3. As to quaternary structure, forms a heterodimer with serine protease NS3. May form homooligomers. In terms of assembly, forms a heterodimer with NS2B. Interacts with non-structural protein 2A (via N-terminus). Interacts with NS4B. Interacts with unphosphorylated RNA-directed RNA polymerase NS5; this interaction stimulates RNA-directed RNA polymerase NS5 guanylyltransferase activity. NS3 interacts with host PDCD6IP; this interaction contributes to virion release. Interacts with serine protease NS3. As to quaternary structure, homodimer. Interacts with host STAT2; this interaction prevents the establishment of cellular antiviral state. Interacts with serine protease NS3. Interacts with host TRIM23; this interaction leads to NS5 ubiquitination. Specific enzymatic cleavages in vivo yield mature proteins. The nascent capsid protein C contains a C-terminal hydrophobic domain that act as a signal sequence for translocation of prM into the lumen of the ER. Mature capsid protein C is cleaved at a site upstream of this hydrophobic domain by NS3. prM is cleaved in post-Golgi vesicles by a host furin, releasing the mature small envelope protein M, and peptide pr. Non-structural protein 2A-alpha, a C-terminally truncated form of non-structural protein 2A, results from partial cleavage by NS3. Specific enzymatic cleavages in vivo yield mature proteins peptide 2K acts as a signal sequence and is removed from the N-terminus of NS4B by the host signal peptidase in the ER lumen. Signal cleavage at the 2K-4B site requires a prior NS3 protease-mediated cleavage at the 4A-2K site. Post-translationally, cleaved in post-Golgi vesicles by a host furin, releasing the mature small envelope protein M, and peptide pr. This cleavage is incomplete as up to 30% of viral particles still carry uncleaved prM. In terms of processing, N-glycosylated. N-glycosylated. The excreted form is glycosylated and this is required for efficient secretion of the protein from infected cells. Post-translationally, polyubiquitinated; ubiquitination is probably mediated by host TRIM23 and is prerequisite for NS5-STAT2 interaction. NS5 is not ISGylated or sumoylated. In terms of processing, acetylated by host KAT5. Acetylation modulates NS3 RNA-binding and unwinding activities and plays an important positive role for viral replication. Phosphorylated on serines residues. This phosphorylation may trigger NS5 nuclear localization.

The protein localises to the virion. The protein resides in the host nucleus. It localises to the host cytoplasm. Its subcellular location is the host perinuclear region. It is found in the secreted. The protein localises to the virion membrane. The protein resides in the host endoplasmic reticulum membrane. It catalyses the reaction Selective hydrolysis of -Xaa-Xaa-|-Yaa- bonds in which each of the Xaa can be either Arg or Lys and Yaa can be either Ser or Ala.. It carries out the reaction RNA(n) + a ribonucleoside 5'-triphosphate = RNA(n+1) + diphosphate. The catalysed reaction is a ribonucleoside 5'-triphosphate + H2O = a ribonucleoside 5'-diphosphate + phosphate + H(+). The enzyme catalyses ATP + H2O = ADP + phosphate + H(+). It catalyses the reaction a 5'-end (5'-triphosphoguanosine)-ribonucleoside in mRNA + S-adenosyl-L-methionine = a 5'-end (N(7)-methyl 5'-triphosphoguanosine)-ribonucleoside in mRNA + S-adenosyl-L-homocysteine. It carries out the reaction a 5'-end (N(7)-methyl 5'-triphosphoguanosine)-ribonucleoside in mRNA + S-adenosyl-L-methionine = a 5'-end (N(7)-methyl 5'-triphosphoguanosine)-(2'-O-methyl-ribonucleoside) in mRNA + S-adenosyl-L-homocysteine + H(+). Plays a role in virus budding by binding to the cell membrane and gathering the viral RNA into a nucleocapsid that forms the core of a mature virus particle. During virus entry, may induce genome penetration into the host cytoplasm after hemifusion induced by the surface proteins. Can migrate to the cell nucleus where it modulates host functions. Functionally, inhibits RNA silencing by interfering with host Dicer. In terms of biological role, prevents premature fusion activity of envelope proteins in trans-Golgi by binding to envelope protein E at pH6.0. After virion release in extracellular space, gets dissociated from E dimers. Its function is as follows. Acts as a chaperone for envelope protein E during intracellular virion assembly by masking and inactivating envelope protein E fusion peptide. prM is the only viral peptide matured by host furin in the trans-Golgi network probably to avoid catastrophic activation of the viral fusion activity in acidic Golgi compartment prior to virion release. prM-E cleavage is inefficient, and many virions are only partially matured. These uncleaved prM would play a role in immune evasion. May play a role in virus budding. Exerts cytotoxic effects by activating a mitochondrial apoptotic pathway through M ectodomain. May display a viroporin activity. Functionally, binds to host cell surface receptor and mediates fusion between viral and cellular membranes. Envelope protein is synthesized in the endoplasmic reticulum in the form of heterodimer with protein prM. They play a role in virion budding in the ER, and the newly formed immature particle is covered with 60 spikes composed of heterodimer between precursor prM and envelope protein E. The virion is transported to the Golgi apparatus where the low pH causes dissociation of PrM-E heterodimers and formation of E homodimers. prM-E cleavage is inefficient, and many virions are only partially matured. These uncleaved prM would play a role in immune evasion. In terms of biological role, involved in immune evasion, pathogenesis and viral replication. Once cleaved off the polyprotein, is targeted to three destinations: the viral replication cycle, the plasma membrane and the extracellular compartment. Essential for viral replication. Required for formation of the replication complex and recruitment of other non-structural proteins to the ER-derived membrane structures. Excreted as a hexameric lipoparticle that plays a role against host immune response. Antagonizing the complement function. Binds to the host macrophages and dendritic cells. Inhibits signal transduction originating from Toll-like receptor 3 (TLR3). Its function is as follows. Component of the viral RNA replication complex that functions in virion assembly and antagonizes the host immune response. Required cofactor for the serine protease function of NS3. May have membrane-destabilizing activity and form viroporins. Functionally, displays three enzymatic activities: serine protease, NTPase and RNA helicase. NS3 serine protease, in association with NS2B, performs its autocleavage and cleaves the polyprotein at dibasic sites in the cytoplasm: C-prM, NS2A-NS2B, NS2B-NS3, NS3-NS4A, NS4A-2K and NS4B-NS5. NS3 RNA helicase binds RNA and unwinds dsRNA in the 3' to 5' direction. Also plays a role in virus assembly. In terms of biological role, regulates the ATPase activity of the NS3 helicase activity. NS4A allows NS3 helicase to conserve energy during unwinding. Its function is as follows. Functions as a signal peptide for NS4B and is required for the interferon antagonism activity of the latter. Induces the formation of ER-derived membrane vesicles where the viral replication takes place. Inhibits interferon (IFN)-induced host STAT1 phosphorylation and nuclear translocation, thereby preventing the establishment of cellular antiviral state by blocking the IFN-alpha/beta pathway. Functionally, replicates the viral (+) and (-) RNA genome, and performs the capping of genomes in the cytoplasm. NS5 methylates viral RNA cap at guanine N-7 and ribose 2'-O positions. Besides its role in RNA genome replication, also prevents the establishment of cellular antiviral state by blocking the interferon-alpha/beta (IFN-alpha/beta) signaling pathway. IFN-I induces binding of NS5 to host IFN-activated transcription factor STAT2, preventing its transcriptional activity. Host TRIM23 is the E3 ligase that interacts with and polyubiquitinates NS5 to promote its binding to STAT2 and trigger IFN-I signaling inhibition. This chain is Genome polyprotein, found in Aedes aegypti (Yellowfever mosquito).